A 249-amino-acid chain; its full sequence is Isoamyl acetate-hydrolyzing esterase 1 homolog (249 aa).

Ser-24 (nucleophile) is an active-site residue. The residue at position 63 (Lys-63) is an N6-succinyllysine. Catalysis depends on Asp-197, which acts as the Proton donor. The active-site Proton acceptor is the His-200.

It belongs to the 'GDSL' lipolytic enzyme family. IAH1 subfamily.

In terms of biological role, probable lipase. The chain is Isoamyl acetate-hydrolyzing esterase 1 homolog (Iah1) from Mus musculus (Mouse).